The chain runs to 57 residues: Conotoxin reg3.17 (57 aa).

The N-terminal stretch at 1 to 16 (TICLLLFPLTVVPLDG) is a signal peptide. Positions 17 to 44 (DQPAHQPAVRKHNIKSAVQLRQWDEEQQ) are excised as a propeptide. Disulfide bonds link Cys-45–Cys-57, Cys-46–Cys-53, and Cys-50–Cys-56.

It belongs to the conotoxin M superfamily. In terms of tissue distribution, expressed by the venom duct.

It localises to the secreted. This chain is Conotoxin reg3.17, found in Conus regius (Crown cone).